A 295-amino-acid polypeptide reads, in one-letter code: Pyridoxal 5'-phosphate synthase subunit PdxS (295 aa).

Aspartate 25 contacts D-ribose 5-phosphate. The active-site Schiff-base intermediate with D-ribose 5-phosphate is lysine 82. Glycine 154 lines the D-ribose 5-phosphate pocket. Position 166 (arginine 166) interacts with D-glyceraldehyde 3-phosphate. Residues glycine 215 and 236–237 contribute to the D-ribose 5-phosphate site; that span reads GS.

Belongs to the PdxS/SNZ family. In terms of assembly, in the presence of PdxT, forms a dodecamer of heterodimers.

The enzyme catalyses aldehydo-D-ribose 5-phosphate + D-glyceraldehyde 3-phosphate + L-glutamine = pyridoxal 5'-phosphate + L-glutamate + phosphate + 3 H2O + H(+). The protein operates within cofactor biosynthesis; pyridoxal 5'-phosphate biosynthesis. Its function is as follows. Catalyzes the formation of pyridoxal 5'-phosphate from ribose 5-phosphate (RBP), glyceraldehyde 3-phosphate (G3P) and ammonia. The ammonia is provided by the PdxT subunit. Can also use ribulose 5-phosphate and dihydroxyacetone phosphate as substrates, resulting from enzyme-catalyzed isomerization of RBP and G3P, respectively. The protein is Pyridoxal 5'-phosphate synthase subunit PdxS of Bacillus mycoides (strain KBAB4) (Bacillus weihenstephanensis).